The sequence spans 424 residues: Protein pellino (424 aa).

Positions 1 to 21 (MVKRTDGTESPILAEDGGDGH) are disordered. Phosphoserine is present on serine 10.

Belongs to the pellino family. In terms of assembly, interacts with pll.

Functionally, scaffold protein involved in the Toll signaling pathway via its interaction with pelle/pll kinase. The chain is Protein pellino (Pli) from Drosophila melanogaster (Fruit fly).